A 116-amino-acid polypeptide reads, in one-letter code: Prefoldin subunit beta (116 aa).

This sequence belongs to the prefoldin subunit beta family. Heterohexamer of two alpha and four beta subunits.

It localises to the cytoplasm. In terms of biological role, molecular chaperone capable of stabilizing a range of proteins. Seems to fulfill an ATP-independent, HSP70-like function in archaeal de novo protein folding. The polypeptide is Prefoldin subunit beta (Thermococcus onnurineus (strain NA1)).